The primary structure comprises 336 residues: Myb family transcription factor PHL8 (336 aa).

The region spanning 31–91 (TDAKPRLKWT…HLQKYRLGKS (61 aa)) is the HTH myb-type domain. A DNA-binding region (H-T-H motif) is located at residues 62–87 (PKGLMKVMEIPGLTLYHLKSHLQKYR). Positions 100-134 (EVSSASENQEVESKNDSRDLRGCSVTEENSNPAKE) are disordered. Residues 110–120 (VESKNDSRDLR) are compositionally biased toward basic and acidic residues. Positions 139-159 (TEALQMQMEVQKKLHEQIEVQ) form a coiled coil. The LHEQLE motif lies at 152–157 (LHEQIE).

Belongs to the MYB-CC family.

Its subcellular location is the nucleus. This chain is Myb family transcription factor PHL8, found in Arabidopsis thaliana (Mouse-ear cress).